The primary structure comprises 323 residues: Serine/threonine-protein phosphatase PP1-gamma catalytic subunit B (323 aa).

Positions 64, 66, 92, and 124 each coordinate Mn(2+). Catalysis depends on His125, which acts as the Proton donor. Positions 173 and 248 each coordinate Mn(2+). Positions 301–323 (KKKPNASRPVTPPRGIITKQAKK) are disordered.

The protein belongs to the PPP phosphatase family. PP-1 subfamily. PP1 comprises a catalytic subunit, ppp1c1, ppp1cb or ppp1cc, which is folded into its native form by inhibitor 2 and glycogen synthetase kinase 3, and then is complexed to one or several targeting or regulatory subunits. Mn(2+) is required as a cofactor.

Its subcellular location is the cytoplasm. It is found in the nucleus. It localises to the cleavage furrow. The protein localises to the nucleolus. The protein resides in the nucleoplasm. Its subcellular location is the chromosome. It is found in the centromere. It localises to the kinetochore. The protein localises to the nucleus speckle. The protein resides in the midbody. Its subcellular location is the mitochondrion. The catalysed reaction is O-phospho-L-seryl-[protein] + H2O = L-seryl-[protein] + phosphate. It catalyses the reaction O-phospho-L-threonyl-[protein] + H2O = L-threonyl-[protein] + phosphate. Functionally, protein phosphatase that associates with over 200 regulatory proteins to form highly specific holoenzymes which dephosphorylate hundreds of biological targets. Protein phosphatase 1 (PP1) is essential for cell division, and participates in the regulation of glycogen metabolism, muscle contractility and protein synthesis. Promotes nuclear envelope reassembly by targeting nuclear membrane vesicles to chromatin at the end of mitosis. Acts by dephosphorylating membrane proteins such as lamin B receptor (lbr) to regulate the binding of membrane proteins to chromatin. The chain is Serine/threonine-protein phosphatase PP1-gamma catalytic subunit B (ppp1cc-b) from Xenopus laevis (African clawed frog).